Here is a 24-residue protein sequence, read N- to C-terminus: LSAMLEDTENWLYEELSLTQDPVV.

Thr19 bears the Phosphothreonine mark.

It belongs to the heat shock protein 70 family. In terms of assembly, homodimer. In the testis, forms a complex with p53 at 32.5 degrees Celsius which is scrotal temperature but not at 37 or 42 degrees Celsius. Expressed at high levels in testis and at much lower levels in brain. In testis, expressed mainly in germ cells. Widespread in brain with highest expression in cerebellum and medulla oblongata. Also expressed in renal medulla of water-restricted animals.

It is found in the cytoplasm. The protein localises to the nucleus. Possesses chaperone activity in vitro where it inhibits aggregation of citrate synthase. This chain is Heat shock 70 kDa protein 4L (Hspa4l), found in Rattus norvegicus (Rat).